The primary structure comprises 129 residues: Small ribosomal subunit protein uS11 (129 aa).

This sequence belongs to the universal ribosomal protein uS11 family. As to quaternary structure, part of the 30S ribosomal subunit. Interacts with proteins S7 and S18. Binds to IF-3.

Its function is as follows. Located on the platform of the 30S subunit, it bridges several disparate RNA helices of the 16S rRNA. Forms part of the Shine-Dalgarno cleft in the 70S ribosome. This chain is Small ribosomal subunit protein uS11, found in Photobacterium profundum (strain SS9).